The primary structure comprises 500 residues: Probable cytosol aminopeptidase (500 aa).

Mn(2+)-binding residues include Lys-265 and Asp-270. Residue Lys-277 is part of the active site. Positions 288, 347, and 349 each coordinate Mn(2+). Residue Arg-351 is part of the active site.

This sequence belongs to the peptidase M17 family. It depends on Mn(2+) as a cofactor.

Its subcellular location is the cytoplasm. It catalyses the reaction Release of an N-terminal amino acid, Xaa-|-Yaa-, in which Xaa is preferably Leu, but may be other amino acids including Pro although not Arg or Lys, and Yaa may be Pro. Amino acid amides and methyl esters are also readily hydrolyzed, but rates on arylamides are exceedingly low.. The enzyme catalyses Release of an N-terminal amino acid, preferentially leucine, but not glutamic or aspartic acids.. Its function is as follows. Presumably involved in the processing and regular turnover of intracellular proteins. Catalyzes the removal of unsubstituted N-terminal amino acids from various peptides. The sequence is that of Probable cytosol aminopeptidase from Rickettsia massiliae (strain Mtu5).